The following is a 607-amino-acid chain: MNKEERAKRQSKIRNFSIIAHIDHGKSTLADRILEKTNALAQREMKAQLLDSMELERERGITIKLNAVQLTYKAKDGEEYILHLIDTPGHVDFTYEVSRSLAACEGAILVVDAAQGIEAQTLANVYLALDNNLEILPVINKIDLPSADPERVRQEVEDVIGLDASEAVLASAKAGIGIEDILEQIVEKVPAPTGDSEEPLQCMIFDSLYDPYRGVIAYIRVVNGTVKVGDKVRMMATGKEFEVTEVGVFTPKTTQRDELTVGDVGFLAASIKNVGDTRVGDTITHAKRPAAEPLKGYRKLNPMVFCGLYPIDSARYNDLRDALEKLELNDSALEFEPETSQALGFGFRCGFLGLLHMEIIQERIEREFKIDLITTAPSVIYKVYLTNGEDFIVDNPSNMPDPQTIDRVEEPFVKAAIMVPNDYVGAVMEICQGKRGTFIDMQYLDETRVTLTYEIPLSEIVYDFFDQLKSNTKGYASFDYELIGYKPSKLVKMDILLNNEQVDALSFIVHRDSAYDRGKVIVEKLKKLIPRQQFEVPIQATIGNKVVSRSTIKAMRKNVLAKCYGGDISRKRKLLDKQKEGKKRMKSVGSVEVPQEAFMAVLKMDDN.

Residues 11-193 (SKIRNFSIIA…QIVEKVPAPT (183 aa)) enclose the tr-type G domain. GTP-binding positions include 23–28 (DHGKST) and 140–143 (NKID).

This sequence belongs to the TRAFAC class translation factor GTPase superfamily. Classic translation factor GTPase family. LepA subfamily.

The protein localises to the cell membrane. It catalyses the reaction GTP + H2O = GDP + phosphate + H(+). In terms of biological role, required for accurate and efficient protein synthesis under certain stress conditions. May act as a fidelity factor of the translation reaction, by catalyzing a one-codon backward translocation of tRNAs on improperly translocated ribosomes. Back-translocation proceeds from a post-translocation (POST) complex to a pre-translocation (PRE) complex, thus giving elongation factor G a second chance to translocate the tRNAs correctly. Binds to ribosomes in a GTP-dependent manner. This chain is Elongation factor 4, found in Bacillus mycoides (strain KBAB4) (Bacillus weihenstephanensis).